Consider the following 287-residue polypeptide: Sulfofructosephosphate aldolase (287 aa).

Asp82 acts as the Proton donor in catalysis. His83 and His180 together coordinate Zn(2+). Position 181 (Gly181) interacts with dihydroxyacetone phosphate. His208 provides a ligand contact to Zn(2+). Residues Gly209 to Ser211 and Asn230 to Thr233 each bind dihydroxyacetone phosphate.

The protein belongs to the class II fructose-bisphosphate aldolase family. It depends on Zn(2+) as a cofactor.

It catalyses the reaction 6-deoxy-6-sulfo-D-fructose 1-phosphate = (2S)-3-sulfolactaldehyde + dihydroxyacetone phosphate. Part of the sulfo-EMP2 pathway, a D-sulfoquinovose degradation pathway that produces sulfolactate (SL). Cleaves 6-deoxy-6-sulfo-D-fructose 1-phosphate (SFP) to form dihydroxyacetone phosphate (DHAP) and 3-sulfolactaldehyde (SLA). The polypeptide is Sulfofructosephosphate aldolase (Alkalicoccus urumqiensis (Bacillus urumqiensis)).